Here is a 346-residue protein sequence, read N- to C-terminus: S-adenosylmethionine:tRNA ribosyltransferase-isomerase (346 aa).

The protein belongs to the QueA family. Monomer.

It localises to the cytoplasm. The catalysed reaction is 7-aminomethyl-7-carbaguanosine(34) in tRNA + S-adenosyl-L-methionine = epoxyqueuosine(34) in tRNA + adenine + L-methionine + 2 H(+). It participates in tRNA modification; tRNA-queuosine biosynthesis. Functionally, transfers and isomerizes the ribose moiety from AdoMet to the 7-aminomethyl group of 7-deazaguanine (preQ1-tRNA) to give epoxyqueuosine (oQ-tRNA). The protein is S-adenosylmethionine:tRNA ribosyltransferase-isomerase of Shewanella denitrificans (strain OS217 / ATCC BAA-1090 / DSM 15013).